The primary structure comprises 186 residues: Large ribosomal subunit protein uL10 (186 aa).

The protein belongs to the universal ribosomal protein uL10 family. As to quaternary structure, part of the ribosomal stalk of the 50S ribosomal subunit. The N-terminus interacts with L11 and the large rRNA to form the base of the stalk. The C-terminus forms an elongated spine to which L12 dimers bind in a sequential fashion forming a multimeric L10(L12)X complex.

Forms part of the ribosomal stalk, playing a central role in the interaction of the ribosome with GTP-bound translation factors. The chain is Large ribosomal subunit protein uL10 from Nitrosococcus oceani (strain ATCC 19707 / BCRC 17464 / JCM 30415 / NCIMB 11848 / C-107).